The following is a 271-amino-acid chain: Thiazole synthase (271 aa).

The active-site Schiff-base intermediate with DXP is the K95. 1-deoxy-D-xylulose 5-phosphate contacts are provided by residues G156, 182-183 (AG), and 204-205 (NT).

This sequence belongs to the ThiG family. Homotetramer. Forms heterodimers with either ThiH or ThiS.

The protein localises to the cytoplasm. It catalyses the reaction [ThiS sulfur-carrier protein]-C-terminal-Gly-aminoethanethioate + 2-iminoacetate + 1-deoxy-D-xylulose 5-phosphate = [ThiS sulfur-carrier protein]-C-terminal Gly-Gly + 2-[(2R,5Z)-2-carboxy-4-methylthiazol-5(2H)-ylidene]ethyl phosphate + 2 H2O + H(+). The protein operates within cofactor biosynthesis; thiamine diphosphate biosynthesis. Its function is as follows. Catalyzes the rearrangement of 1-deoxy-D-xylulose 5-phosphate (DXP) to produce the thiazole phosphate moiety of thiamine. Sulfur is provided by the thiocarboxylate moiety of the carrier protein ThiS. In vitro, sulfur can be provided by H(2)S. The protein is Thiazole synthase of Yersinia pseudotuberculosis serotype O:3 (strain YPIII).